Consider the following 183-residue polypeptide: MEVQELFLLALAISLDAFGVILCIGINKGITLKSSMIFVFSFGFFQFFLSFLGGYIGTIFNKYIVPIPTIVGGLIIIIVGILMITEGFKEKEESIFLNKIMYLILGVSVSIDALVIGFTTLSYINNLFYLFMSSLFMGLIATIICSLGIILSKYIKKISIISSYADYIGGIILILFGLKMLFF.

Helical transmembrane passes span 6 to 26, 36 to 56, 64 to 84, 100 to 120, 130 to 150, and 158 to 178; these read LFLLALAISLDAFGVILCIGI, MIFVFSFGFFQFFLSFLGGYI, IVPIPTIVGGLIIIIVGILMI, IMYLILGVSVSIDALVIGFTT, LFMSSLFMGLIATIICSLGII, and ISIISSYADYIGGIILILFGL.

The protein belongs to the MntP (TC 9.B.29) family.

It localises to the cell membrane. In terms of biological role, probably functions as a manganese efflux pump. The chain is Putative manganese efflux pump MntP 1 from Clostridium botulinum (strain Hall / ATCC 3502 / NCTC 13319 / Type A).